The following is a 315-amino-acid chain: Ribosomal large subunit pseudouridine synthase D (315 aa).

Positions 18 to 87 constitute an S4 RNA-binding domain; that stretch reads KRLDQILSKL…LPQNIALNTI (70 aa). The active site involves Asp139.

The protein belongs to the pseudouridine synthase RluA family.

The protein localises to the cytoplasm. The catalysed reaction is uridine(1911/1915/1917) in 23S rRNA = pseudouridine(1911/1915/1917) in 23S rRNA. Responsible for synthesis of pseudouridine from uracil at positions 1911, 1915 and 1917 in 23S ribosomal RNA. This Buchnera aphidicola subsp. Schizaphis graminum (strain Sg) protein is Ribosomal large subunit pseudouridine synthase D (rluD).